Here is a 257-residue protein sequence, read N- to C-terminus: Beta-fibrinogenase (257 aa).

The signal sequence occupies residues 1–18 (MVLIRVLANLLLLQLSHA). A propeptide spanning residues 19–24 (QKSSEL) is cleaved from the precursor. The Peptidase S1 domain occupies 25–248 (VVGGDECNIN…YTDWIQSIIA (224 aa)). 6 disulfide bridges follow: Cys31–Cys162, Cys49–Cys65, Cys97–Cys255, Cys141–Cys209, Cys173–Cys188, and Cys199–Cys224. Asn44 carries N-linked (GlcNAc...) asparagine glycosylation. The Charge relay system role is filled by His64. Asn78 and Asn102 each carry an N-linked (GlcNAc...) asparagine glycan. Asp109 acts as the Charge relay system in catalysis. N-linked (GlcNAc...) asparagine glycosylation is found at Asn153 and Asn169. The Charge relay system role is filled by Ser203. Asn250 carries N-linked (GlcNAc...) asparagine glycosylation.

Monomer. In terms of processing, glycosylated. Contains 23.0% of hexoses, 8.3% of hexosamines and 1.0% of sialic acids. Expressed by the venom gland.

The protein localises to the secreted. Its activity is regulated as follows. Inhibited by diisopropylfluorophosphate (DFP) and PMSF. Its function is as follows. Snake venom serine protease that has fibrinogenolytic activities by hydrolyzing the beta chain of fibrinogen (FGB). Typical arginine esterase which hydrolyzes esters and amides of arginine. In Macrovipera lebetinus (Levantine viper), this protein is Beta-fibrinogenase.